A 921-amino-acid chain; its full sequence is Protein translocase subunit SecA (921 aa).

ATP contacts are provided by residues Gln-87, 105 to 109, and Asp-515; that span reads GEGKT. The interval 872 to 901 is disordered; the sequence is DMEVAGSTGDRGAALDIQPAPVRSGPKIGR. Cys-905, Cys-907, Cys-916, and Cys-917 together coordinate Zn(2+).

The protein belongs to the SecA family. As to quaternary structure, monomer and homodimer. Part of the essential Sec protein translocation apparatus which comprises SecA, SecYEG and auxiliary proteins SecDF-YajC and YidC. Requires Zn(2+) as cofactor.

It localises to the cell inner membrane. The protein localises to the cytoplasm. The catalysed reaction is ATP + H2O + cellular proteinSide 1 = ADP + phosphate + cellular proteinSide 2.. Part of the Sec protein translocase complex. Interacts with the SecYEG preprotein conducting channel. Has a central role in coupling the hydrolysis of ATP to the transfer of proteins into and across the cell membrane, serving both as a receptor for the preprotein-SecB complex and as an ATP-driven molecular motor driving the stepwise translocation of polypeptide chains across the membrane. The chain is Protein translocase subunit SecA from Polynucleobacter asymbioticus (strain DSM 18221 / CIP 109841 / QLW-P1DMWA-1) (Polynucleobacter necessarius subsp. asymbioticus).